The chain runs to 944 residues: Protein unc-45 homolog A (944 aa).

A disordered region spans residues 1 to 25 (MTVSGPGTPEPRPSDPGASSAEELR). 3 TPR repeats span residues 21 to 54 (AEELRKEGNELFKCGDYEGALTAYTQALSLGATP), 58 to 91 (AILHRNRAACHLKLEDYSKAESEASKAIEKDGGD), and 92 to 125 (VKALYRRSQALEKLGRLDQAVLDLKRCVSLEPKN). An N6-acetyllysine modification is found at lysine 70. At lysine 483 the chain carries N6-acetyllysine.

As to quaternary structure, interacts with PGR isoforms A and B as well as with NR3C1 in the absence of ligand, and with HSP90AB1. Binding to HSP90AB1 involves 2 UNC45A monomers per HSP90AB1 dimer.

It localises to the cytoplasm. It is found in the perinuclear region. The protein resides in the nucleus. May act as co-chaperone for HSP90 (Potential). Prevents the stimulation of HSP90AB1 ATPase activity by AHSA1. Positive factor in promoting PGR function in the cell. May be necessary for proper folding of myosin (Potential). Necessary for normal cell proliferation. Necessary for normal myotube formation and myosin accumulation during muscle cell development. May play a role in erythropoiesis in stroma cells in the spleen. In Rattus norvegicus (Rat), this protein is Protein unc-45 homolog A (Unc45a).